A 103-amino-acid chain; its full sequence is Somatoliberin (103 aa).

An N-terminal signal peptide occupies residues 1–19 (MLLWVLFVILILTSGSHCS). 2 propeptides span residues 20 to 30 (LPPSPPFRMQR) and 74 to 103 (QEDS…SADA).

It belongs to the glucagon family.

It is found in the secreted. Its function is as follows. GRF is released by the hypothalamus and acts on the adenohypophyse to stimulate the secretion of growth hormone. In Mus musculus (Mouse), this protein is Somatoliberin (Ghrh).